We begin with the raw amino-acid sequence, 365 residues long: tRNA/tmRNA (uracil-C(5))-methyltransferase (365 aa).

Residues Q189, Y217, N222, E238, and D298 each contribute to the S-adenosyl-L-methionine site. The Nucleophile role is filled by C323. E357 functions as the Proton acceptor in the catalytic mechanism.

Belongs to the class I-like SAM-binding methyltransferase superfamily. RNA M5U methyltransferase family. TrmA subfamily.

The catalysed reaction is uridine(54) in tRNA + S-adenosyl-L-methionine = 5-methyluridine(54) in tRNA + S-adenosyl-L-homocysteine + H(+). The enzyme catalyses uridine(341) in tmRNA + S-adenosyl-L-methionine = 5-methyluridine(341) in tmRNA + S-adenosyl-L-homocysteine + H(+). Its function is as follows. Dual-specificity methyltransferase that catalyzes the formation of 5-methyluridine at position 54 (m5U54) in all tRNAs, and that of position 341 (m5U341) in tmRNA (transfer-mRNA). In Shewanella baltica (strain OS155 / ATCC BAA-1091), this protein is tRNA/tmRNA (uracil-C(5))-methyltransferase.